A 126-amino-acid chain; its full sequence is Protein ApaG (126 aa).

One can recognise an ApaG domain in the interval 2–126; the sequence is TSLEDSIKVE…FRLAVPGMLH (125 aa).

This Shewanella sediminis (strain HAW-EB3) protein is Protein ApaG.